The sequence spans 395 residues: S-adenosylmethionine synthase (395 aa).

His16 contributes to the ATP binding site. Residue Asp18 participates in Mg(2+) binding. Glu44 is a K(+) binding site. Glu57 and Gln100 together coordinate L-methionine. The segment at Gln100–Asp110 is flexible loop. Residues Asp174–Lys176, Arg241–Phe242, Asp250, Arg256–Lys257, Ala273, and Lys277 contribute to the ATP site. Asp250 contributes to the L-methionine binding site. Position 281 (Lys281) interacts with L-methionine.

It belongs to the AdoMet synthase family. Homotetramer; dimer of dimers. Mg(2+) is required as a cofactor. The cofactor is K(+).

The protein localises to the cytoplasm. The enzyme catalyses L-methionine + ATP + H2O = S-adenosyl-L-methionine + phosphate + diphosphate. The protein operates within amino-acid biosynthesis; S-adenosyl-L-methionine biosynthesis; S-adenosyl-L-methionine from L-methionine: step 1/1. Catalyzes the formation of S-adenosylmethionine (AdoMet) from methionine and ATP. The overall synthetic reaction is composed of two sequential steps, AdoMet formation and the subsequent tripolyphosphate hydrolysis which occurs prior to release of AdoMet from the enzyme. The sequence is that of S-adenosylmethionine synthase from Lactiplantibacillus plantarum (strain ATCC BAA-793 / NCIMB 8826 / WCFS1) (Lactobacillus plantarum).